We begin with the raw amino-acid sequence, 126 residues long: Actin-depolymerizing factor (126 aa).

Residues E1 to L126 enclose the ADF-H domain.

It belongs to the actin-binding proteins ADF family. Preferentially in mature anther.

In terms of biological role, actin-depolymerizing protein. Severs actin filaments (F-actin) and binds to actin monomers. The chain is Actin-depolymerizing factor from Brassica napus (Rape).